The chain runs to 257 residues: E3 ubiquitin-protein ligase RNF170 (257 aa).

The Lumenal segment spans residues 1–24 (MADNQEGRPYFPLDEGSIIEGVSD). The chain crosses the membrane as a helical span at residues 25–45 (QVIVVVLLSFVAVGSLLYLLL). The Cytoplasmic portion of the chain corresponds to 46-200 (RNDEQNIHPE…GGLFWMFRIR (155 aa)). The RING-type zinc finger occupies 87–130 (CPVCLQQATFPVETNCGHLFCGSCIIAYWRYGSWLGAINCPICR). A helical transmembrane segment spans residues 201 to 221 (IVLCLLGALFYLVSPLDIIPE). Position 222 (Ala-222) is a topological domain, lumenal. A helical transmembrane segment spans residues 223-243 (VFGLLGFLDDFFVLFLLLIYI). Topologically, residues 244 to 257 (SIMYREVVTQRLYR) are cytoplasmic.

It is found in the endoplasmic reticulum membrane. It carries out the reaction S-ubiquitinyl-[E2 ubiquitin-conjugating enzyme]-L-cysteine + [acceptor protein]-L-lysine = [E2 ubiquitin-conjugating enzyme]-L-cysteine + N(6)-ubiquitinyl-[acceptor protein]-L-lysine.. Its pathway is protein modification; protein ubiquitination. E3 ubiquitin-protein ligase that plays an essential role in stimulus-induced inositol 1,4,5-trisphosphate receptor (ITPR) ubiquitination and degradation via the endoplasmic reticulum-associated degradation (ERAD) pathway. Also involved in ITPR turnover in resting cells. The chain is E3 ubiquitin-protein ligase RNF170 (rnf170) from Xenopus tropicalis (Western clawed frog).